A 522-amino-acid polypeptide reads, in one-letter code: Sensory neuron membrane protein 1 (522 aa).

At 1–11 (MKLPKHLKFAA) the chain is on the cytoplasmic side. The chain crosses the membrane as a helical span at residues 12 to 32 (GAGGAFLFGILFGWVMFPAIL). Residues 33 to 455 (KGQLKKEMAL…KFQLFYPKKA (423 aa)) lie on the Extracellular side of the membrane. 2 N-linked (GlcNAc...) asparagine glycosylation sites follow: Asn-67 and Asn-229. Intrachain disulfides connect Cys-268–Cys-333, Cys-297–Cys-350, and Cys-335–Cys-339. N-linked (GlcNAc...) asparagine glycosylation occurs at Asn-438. Residues 456-476 (VGVIKWLLVTFGGFGLIGCTI) form a helical membrane-spanning segment. The Cytoplasmic segment spans residues 477–522 (YHYKDRIMSFASSPGSAAVTKVKPEEVEQKDVSVIGQPQEPAKINM).

The protein belongs to the CD36 family.

The protein resides in the cell membrane. Plays an olfactory role that is not restricted to pheromone sensitivity. This Plutella xylostella (Diamondback moth) protein is Sensory neuron membrane protein 1.